The following is an 84-amino-acid chain: Cell division topological specificity factor (84 aa).

Belongs to the MinE family.

Prevents the cell division inhibition by proteins MinC and MinD at internal division sites while permitting inhibition at polar sites. This ensures cell division at the proper site by restricting the formation of a division septum at the midpoint of the long axis of the cell. This is Cell division topological specificity factor from Pseudomonas putida (strain ATCC 700007 / DSM 6899 / JCM 31910 / BCRC 17059 / LMG 24140 / F1).